Consider the following 316-residue polypeptide: tRNA pseudouridine synthase B (316 aa).

Catalysis depends on D47, which acts as the Nucleophile.

It belongs to the pseudouridine synthase TruB family. Type 1 subfamily.

It catalyses the reaction uridine(55) in tRNA = pseudouridine(55) in tRNA. Functionally, responsible for synthesis of pseudouridine from uracil-55 in the psi GC loop of transfer RNAs. This Aliivibrio fischeri (strain ATCC 700601 / ES114) (Vibrio fischeri) protein is tRNA pseudouridine synthase B.